A 487-amino-acid chain; its full sequence is MLQDSVGEVTTKYHALSVPLSLECGVSLSGVRIAYERYGRADGKNVILVCHPLTGDAHAAGFHKGDTKPGWWDGIIGPGKALDTNRYCVIAANVLGGCKGSTGPSSEDPATGKPYGTTFPVITIRDMVHAEHQLLEDLGISELYAVIGGSMGGMQAMQWSVEFPSFVRRIICIASAGYTTPMHIAFGAVGRAAIMSDPEWNGGNYPAEKKPNHGLSLARMMAHITYLSDESMRTKFGRRLQKQDAFGYGFDTEFSVESYLQHQGETFVERFDPNSYLYITRAVDYYDLTKNGSLTEGLAATQAKFLIISVSSDWLYPPYLSQEIMLALTTNNREARYAEIVSPHGHDGFLLENAQLNYIVGQFLTPMTVEDLMTNNPPSIQETSSIREAAELMIGHEINHLPVVSGNGTLSGIVTSWDIAKSVAGDFQDLAEIMTKDVITIQRSDSLRLAASLMEKHAISALPVVDDSNHVLGMLTSETLSLSEVLQ.

Residues 45–352 (NVILVCHPLT…PHGHDGFLLE (308 aa)) enclose the AB hydrolase-1 domain. Catalysis depends on serine 150, which acts as the Nucleophile. Residue arginine 219 coordinates substrate. Active-site residues include aspartate 313 and histidine 346. Aspartate 347 contacts substrate. CBS domains are found at residues 373-430 (MTNN…FQDL) and 434-487 (MTKD…EVLQ).

This sequence belongs to the AB hydrolase superfamily. MetX family. As to quaternary structure, homodimer.

Its subcellular location is the cytoplasm. The enzyme catalyses L-homoserine + acetyl-CoA = O-acetyl-L-homoserine + CoA. The protein operates within amino-acid biosynthesis; L-methionine biosynthesis via de novo pathway; O-acetyl-L-homoserine from L-homoserine: step 1/1. Its function is as follows. Transfers an acetyl group from acetyl-CoA to L-homoserine, forming acetyl-L-homoserine. This is Homoserine O-acetyltransferase from Methanocorpusculum labreanum (strain ATCC 43576 / DSM 4855 / Z).